Consider the following 122-residue polypeptide: Large ribosomal subunit protein uL14 (122 aa).

Belongs to the universal ribosomal protein uL14 family. In terms of assembly, part of the 50S ribosomal subunit. Forms a cluster with proteins L3 and L19. In the 70S ribosome, L14 and L19 interact and together make contacts with the 16S rRNA in bridges B5 and B8.

Functionally, binds to 23S rRNA. Forms part of two intersubunit bridges in the 70S ribosome. In Paraburkholderia phymatum (strain DSM 17167 / CIP 108236 / LMG 21445 / STM815) (Burkholderia phymatum), this protein is Large ribosomal subunit protein uL14.